Reading from the N-terminus, the 142-residue chain is Hemoglobin subunit alpha (142 aa).

A Globin domain is found at 2 to 142; that stretch reads VLSAADKGNV…VSTVLTSKYR (141 aa). Serine 4 bears the Phosphoserine mark. 2 positions are modified to N6-succinyllysine: lysine 8 and lysine 12. At lysine 17 the chain carries N6-acetyllysine; alternate. Lysine 17 is modified (N6-succinyllysine; alternate). At tyrosine 25 the chain carries Phosphotyrosine. Serine 36 carries the post-translational modification Phosphoserine. Lysine 41 bears the N6-succinyllysine mark. Serine 50 carries the phosphoserine modification. Residue histidine 59 coordinates O2. Heme b is bound at residue histidine 88. Serine 103 is subject to Phosphoserine. A Phosphothreonine modification is found at threonine 109. Residue serine 125 is modified to Phosphoserine. Phosphothreonine occurs at positions 135 and 138. Serine 139 carries the phosphoserine modification.

It belongs to the globin family. In terms of assembly, heterotetramer of two alpha chains and two beta chains. As to expression, red blood cells.

In terms of biological role, involved in oxygen transport from the lung to the various peripheral tissues. Hemopressin acts as an antagonist peptide of the cannabinoid receptor CNR1. Hemopressin-binding efficiently blocks cannabinoid receptor CNR1 and subsequent signaling. The polypeptide is Hemoglobin subunit alpha (HBA) (Bos taurus (Bovine)).